The sequence spans 96 residues: Large ribosomal subunit protein uL23 (96 aa).

The protein belongs to the universal ribosomal protein uL23 family. Part of the 50S ribosomal subunit. Contacts protein L29, and trigger factor when it is bound to the ribosome.

One of the early assembly proteins it binds 23S rRNA. One of the proteins that surrounds the polypeptide exit tunnel on the outside of the ribosome. Forms the main docking site for trigger factor binding to the ribosome. This Halalkalibacterium halodurans (strain ATCC BAA-125 / DSM 18197 / FERM 7344 / JCM 9153 / C-125) (Bacillus halodurans) protein is Large ribosomal subunit protein uL23.